Reading from the N-terminus, the 513-residue chain is Sugar transport protein 7 (513 aa).

The Cytoplasmic portion of the chain corresponds to 1–26 (MAGGSFGPTGVAKERAEQYQGKVTSY). 12 helical membrane passes run 27-47 (VIIA…DIGI), 84-104 (GLAA…LVAS), 121-141 (ISFL…MLLA), 144-164 (IMLG…LSEV), 171-191 (GGLN…ANMV), 205-225 (LSLG…YFLP), 286-306 (LVMA…SILF), 324-344 (YSSA…IGLV), 351-371 (ALLI…AVIL), 387-407 (VIVV…WGPL), 427-447 (ITVA…LGLL), and 452-472 (FGIF…VYFL). Residues 473–513 (LPETKGVPIEEMTLLWSKHWFWKKVLPDATNLEDESKNVSV) lie on the Cytoplasmic side of the membrane.

The protein belongs to the major facilitator superfamily. Sugar transporter (TC 2.A.1.1) family.

It is found in the cell membrane. Mediates an active uptake of hexoses, probably by sugar/hydrogen symport. This is Sugar transport protein 7 (STP7) from Arabidopsis thaliana (Mouse-ear cress).